Reading from the N-terminus, the 418-residue chain is MAEIKNYTLNFGPQHPAAHGVLRLVLELDGEVIQRADPHIGLLHRATEKLAEHKTFIQALPYMDRLDYVSMMCNEHAYVMAIEKLLGIEAPLRAQYIRVMFDEITRVLNHLMSLGSHALDVGAMAVFLYAFREREDLMDCYEAVSGARMHAAYYRPGGVYRDLPDTMPQYGDSSKYRGEKEVRAMNDARSGSLLDFIEDFTNRFPGCVDEYETLLTDNRIWKQRLVGIGVVDPDRAKALGFTGPMLRGSGVAWDLRKTQPYEVYDLMDFDVPVGVNGDCYDRYLVRVAEMRESNRIIRQCVEWLRNNPGPVMIENHKIAPPSRTAMKSNMEELIHHFKLFSEGFHVPPGEAYAAVEHPKGEFGIYLVADGANKPYRLKIRAPGFAHLQSLDEMARGHMIADAVTIIGTQDIVFGEIDR.

It belongs to the complex I 49 kDa subunit family. As to quaternary structure, NDH-1 is composed of 14 different subunits. Subunits NuoB, C, D, E, F, and G constitute the peripheral sector of the complex.

Its subcellular location is the cell inner membrane. It catalyses the reaction a quinone + NADH + 5 H(+)(in) = a quinol + NAD(+) + 4 H(+)(out). NDH-1 shuttles electrons from NADH, via FMN and iron-sulfur (Fe-S) centers, to quinones in the respiratory chain. The immediate electron acceptor for the enzyme in this species is believed to be ubiquinone. Couples the redox reaction to proton translocation (for every two electrons transferred, four hydrogen ions are translocated across the cytoplasmic membrane), and thus conserves the redox energy in a proton gradient. The chain is NADH-quinone oxidoreductase subunit D from Bordetella bronchiseptica (strain ATCC BAA-588 / NCTC 13252 / RB50) (Alcaligenes bronchisepticus).